A 202-amino-acid chain; its full sequence is Holliday junction branch migration complex subunit RuvA (202 aa).

The interval 1 to 64 (MIGRLRGTLA…EDAQLLYGFA (64 aa)) is domain I. Residues 65-143 (SKRERDFFRE…AWEAVPSMFA (79 aa)) form a domain II region. Residues 144 to 154 (LVPNQPDAPAP) form a flexible linker region. The tract at residues 154–202 (PVASAESDAVSALISLGYKPQEASKAVSAIKDKGLSSEDMIRRALKGMI) is domain III.

The protein belongs to the RuvA family. In terms of assembly, homotetramer. Forms an RuvA(8)-RuvB(12)-Holliday junction (HJ) complex. HJ DNA is sandwiched between 2 RuvA tetramers; dsDNA enters through RuvA and exits via RuvB. An RuvB hexamer assembles on each DNA strand where it exits the tetramer. Each RuvB hexamer is contacted by two RuvA subunits (via domain III) on 2 adjacent RuvB subunits; this complex drives branch migration. In the full resolvosome a probable DNA-RuvA(4)-RuvB(12)-RuvC(2) complex forms which resolves the HJ.

The protein resides in the cytoplasm. Its function is as follows. The RuvA-RuvB-RuvC complex processes Holliday junction (HJ) DNA during genetic recombination and DNA repair, while the RuvA-RuvB complex plays an important role in the rescue of blocked DNA replication forks via replication fork reversal (RFR). RuvA specifically binds to HJ cruciform DNA, conferring on it an open structure. The RuvB hexamer acts as an ATP-dependent pump, pulling dsDNA into and through the RuvAB complex. HJ branch migration allows RuvC to scan DNA until it finds its consensus sequence, where it cleaves and resolves the cruciform DNA. This Pseudomonas fluorescens (strain ATCC BAA-477 / NRRL B-23932 / Pf-5) protein is Holliday junction branch migration complex subunit RuvA.